A 259-amino-acid polypeptide reads, in one-letter code: Type III pantothenate kinase (259 aa).

ATP is bound at residue 9–16; it reads DAGNSRIK. Residues Y93 and 100–103 each bind substrate; that span reads GSDR. The active-site Proton acceptor is D102. ATP is bound at residue T126. Residue T190 participates in substrate binding.

Belongs to the type III pantothenate kinase family. As to quaternary structure, homodimer. NH4(+) serves as cofactor. Requires K(+) as cofactor.

It localises to the cytoplasm. It catalyses the reaction (R)-pantothenate + ATP = (R)-4'-phosphopantothenate + ADP + H(+). It participates in cofactor biosynthesis; coenzyme A biosynthesis; CoA from (R)-pantothenate: step 1/5. Catalyzes the phosphorylation of pantothenate (Pan), the first step in CoA biosynthesis. This is Type III pantothenate kinase from Burkholderia thailandensis (strain ATCC 700388 / DSM 13276 / CCUG 48851 / CIP 106301 / E264).